A 275-amino-acid chain; its full sequence is Phosphate import ATP-binding protein PstB 1 (275 aa).

An ABC transporter domain is found at 22–261 (LETQAVSVYY…NRTEKIFNSP (240 aa)). 54-61 (GPSGCGKS) serves as a coordination point for ATP.

This sequence belongs to the ABC transporter superfamily. Phosphate importer (TC 3.A.1.7) family. As to quaternary structure, the complex is composed of two ATP-binding proteins (PstB), two transmembrane proteins (PstC and PstA) and a solute-binding protein (PstS).

The protein resides in the cell inner membrane. The enzyme catalyses phosphate(out) + ATP + H2O = ADP + 2 phosphate(in) + H(+). Part of the ABC transporter complex PstSACB involved in phosphate import. Responsible for energy coupling to the transport system. The chain is Phosphate import ATP-binding protein PstB 1 from Synechococcus sp. (strain JA-2-3B'a(2-13)) (Cyanobacteria bacterium Yellowstone B-Prime).